We begin with the raw amino-acid sequence, 150 residues long: Ribosome maturation factor RimP (150 aa).

Belongs to the RimP family.

The protein resides in the cytoplasm. Required for maturation of 30S ribosomal subunits. In Hahella chejuensis (strain KCTC 2396), this protein is Ribosome maturation factor RimP.